Reading from the N-terminus, the 482-residue chain is MTSFELESPIEIKTDPTDLDQESDSFVQEISRFNKALEQRFRDKMRLHESLSRKIVSFQANKSKPQYRWFKYKEAFSVDLVNQLIFEYEKKSFERILDPFAGAGTMLFACSDAGIQADGIEVLPIGQEIIEVRKIIQRQFRREDFLRLIEWYKQKPWNQHNNRKYLNRLRITDGAYPPETEASIERFLFSIEKENILVKQVLRFALLCILESISYTRKDGQYLRWDKRAFRKSGSDKFDKGKILDFDEAITEQIKLILNDSFDLISNTLFCYGTQRSGINLFNASCLKILPEFEQDFYDCIITSPPYCNRYDYTRTYALELALLGVGERDIVQLRQDMLSCTVENKEKSLIHNWQEALRILDKQELLQSILRFLERELERKKLNNNGIPRMIKGYFYEMACVIIECFRVLKNGSPLFMVNDNVRYAGIDISVDLILSNIAEEIGFNVEKILVLPTGKGNSSQQMGTHGRKTLRKCVYVWRKP.

Belongs to the N(4)/N(6)-methyltransferase family. N(4) subfamily.

The catalysed reaction is a 2'-deoxycytidine in DNA + S-adenosyl-L-methionine = an N(4)-methyl-2'-deoxycytidine in DNA + S-adenosyl-L-homocysteine + H(+). Its function is as follows. An alpha subtype methylase that recognizes the double-stranded sequence 5'-CYCGRG-3', methylates C-1 on both strands, and protects the DNA from cleavage by the AvaI endonuclease. The polypeptide is Type II methyltransferase M.AvaI (Anabaena variabilis).